Consider the following 160-residue polypeptide: MFRGKFDTTIDAKGRTSIPAKFREILLDTFGDERFFLTKSSPVRLDGDQVCYGLVIYPYHEFLALEEKLKDGTALGLTVNQLASVRRTILVPAVECVADKLGRVLVPNDLRKTAQLEREIHFVGMQNKVDIYSQAVWARVCEQDEQNFPVDSAALAGLGL.

SpoVT-AbrB domains are found at residues 5-50 and 93-136; these read KFDT…GDQV and AVEC…SQAV.

It belongs to the MraZ family. As to quaternary structure, forms oligomers.

The protein resides in the cytoplasm. It localises to the nucleoid. This Geobacter sp. (strain M21) protein is Transcriptional regulator MraZ.